Here is a 581-residue protein sequence, read N- to C-terminus: MATIGRRAYAEMFGPTVGDRVRLADTNLIIEVEDDYTLRAGGYGEEVKFGGGKTIRDGMAQSQRSRAEGAVDTVMTNALIIDHWGIVKADIGLKDSRIVAIGKAGNPDTQPGVDIIIGPGTEVISCEGSIVTAGGFDSHIHFICPQLIEEALSSGITTMTGGGTGPATGTFATTCTPGSWHIERMLQAADAFAMNLGFMGKGNASLPAALHEQINAGALGLKLHEDWGTTPAAIDNCLNVAELTDTQVAIHTDTLNESGFVEDTLAAFKGRSIHTFHTEGAGGGHAPDIMKLVGEPNVLPSSTNPTRPYTVNTLDEHVDMLMVCHHLDAAIAEDLAFAESRIRKETIAAEDILHDLGAISIMSSDSQAMGRVGEVIIRTWQTAHKMKAQRGWLAPPPERSEPVEKLQRNDNYRVKRYLAKYTINPALTHGMAHEVGSIELGKWADLVVWRPAFFGVKPSLIVKGGSIAMAAMGDPNASIPTPQPVHYRPMFGAFGGALARGSLTFVSQAGLNAGIGARYGLSKTLSAVKNIRGIRKEHMVHNHYLPKMEIDAQTYSVRADGELLTCEPAVSLPMTQRYFLF.

The Urease domain maps to 134–581 (GGFDSHIHFI…LPMTQRYFLF (448 aa)). The Ni(2+) site is built by His-139, His-141, and Lys-222. An N6-carboxylysine modification is found at Lys-222. Residue His-224 coordinates substrate. Positions 251 and 277 each coordinate Ni(2+). His-325 (proton donor) is an active-site residue. Asp-365 contributes to the Ni(2+) binding site.

The protein belongs to the metallo-dependent hydrolases superfamily. Urease alpha subunit family. In terms of assembly, heterotrimer of UreA (gamma), UreB (beta) and UreC (alpha) subunits. Three heterotrimers associate to form the active enzyme. Ni cation serves as cofactor. Post-translationally, carboxylation allows a single lysine to coordinate two nickel ions.

It is found in the cytoplasm. It carries out the reaction urea + 2 H2O + H(+) = hydrogencarbonate + 2 NH4(+). Its pathway is nitrogen metabolism; urea degradation; CO(2) and NH(3) from urea (urease route): step 1/1. In Albidiferax ferrireducens (strain ATCC BAA-621 / DSM 15236 / T118) (Rhodoferax ferrireducens), this protein is Urease subunit alpha.